Consider the following 165-residue polypeptide: Large ribosomal subunit protein eL15 (165 aa).

A disordered region spans residues 126-147; the sequence is TSAGRKSRGLGKGHKFHHTIGG. Positions 130-143 are enriched in basic residues; that stretch reads RKSRGLGKGHKFHH.

The protein belongs to the eukaryotic ribosomal protein eL15 family. Component of the large ribosomal subunit.

It is found in the cytoplasm. In terms of biological role, component of the large ribosomal subunit. The ribosome is a large ribonucleoprotein complex responsible for the synthesis of proteins in the cell. The sequence is that of Large ribosomal subunit protein eL15 (RPL15) from Gallus gallus (Chicken).